The following is a 154-amino-acid chain: MGLSDGEWQLVLNVWGKVEADLAGHGQEVLIRLFKNHPETLEKFDKFKNLKSEDEMKGSDDLKKHGNTVLSALGGILKKKGQHEAELKPLAQSHATKHKIPVKYLEFISEAIIQVLQSKHPGDFGADAQGAMSKALELFRNDMAAKYKELGFQG.

In terms of domain architecture, Globin spans 2 to 148 (GLSDGEWQLV…FRNDMAAKYK (147 aa)). Ser-4 is subject to Phosphoserine. His-65 contributes to the nitrite binding site. An O2-binding site is contributed by His-65. Position 68 is a phosphothreonine (Thr-68). His-94 contacts heme b.

Belongs to the globin family. As to quaternary structure, monomeric.

It is found in the cytoplasm. The protein resides in the sarcoplasm. It carries out the reaction Fe(III)-heme b-[protein] + nitric oxide + H2O = Fe(II)-heme b-[protein] + nitrite + 2 H(+). It catalyses the reaction H2O2 + AH2 = A + 2 H2O. In terms of biological role, monomeric heme protein which primary function is to store oxygen and facilitate its diffusion within muscle tissues. Reversibly binds oxygen through a pentacoordinated heme iron and enables its timely and efficient release as needed during periods of heightened demand. Depending on the oxidative conditions of tissues and cells, and in addition to its ability to bind oxygen, it also has a nitrite reductase activity whereby it regulates the production of bioactive nitric oxide. Under stress conditions, like hypoxia and anoxia, it also protects cells against reactive oxygen species thanks to its pseudoperoxidase activity. This Ochotona princeps (Southern American pika) protein is Myoglobin (MB).